A 507-amino-acid polypeptide reads, in one-letter code: MNDKQKKPQKLKARLPRGFVDRTAGDIRAVNEMTAKIREVYEHYGFDPLETPQFEYTDALGKFLPDSDRPNEGVFSLQDDDEQWMSLRYDLTAPLARHVAENFNEIQLPYRTYRAGYVFRNEKPGPGRFRQFMQFDADTVGAPGVQADAEMCMMMADTLEALGIKRGDYVVRVNNRKVLDGVLEAIGLGGDDKAGQRLNVLRAIDKLDKFGPEGVALLLGPGRKDESGDFTKGAGLDQAQIDKVLFFVGIKDYAESASRLAELVAGTSKGAEGVEELNFIGTLVASAGYGADRIKIDPSIVRGLEYYTGPVYEAELSFDVTNEKGEKVVFGSVGGGGRYDGLVSRFMGQPVPATGFSIGVSRLMTALKNLGKLGASEVIEPVLVTVMDGDVEAMGRYQKMTQDLRAAGIRAEMFQGNWKKFGNQLKYADRRGCPVAIIQGGDERATGVVQIKDLIEGKRLSGEIEDNASWREARVAQETVPEADLVAKVREILAAQAEDRKRAGGDV.

This sequence belongs to the class-II aminoacyl-tRNA synthetase family. As to quaternary structure, homodimer.

The protein resides in the cytoplasm. It catalyses the reaction tRNA(His) + L-histidine + ATP = L-histidyl-tRNA(His) + AMP + diphosphate + H(+). This is Histidine--tRNA ligase from Rhizobium leguminosarum bv. trifolii (strain WSM2304).